The chain runs to 418 residues: Metal tolerance protein 1 (418 aa).

The Cytoplasmic segment spans residues M1 to R56. The helical transmembrane segment at K57–I77 threads the bilayer. The Vacuolar segment spans residues K78 to A89. The chain crosses the membrane as a helical span at residues H90–W110. The Cytoplasmic segment spans residues E111–R122. Residues I123–V143 form a helical membrane-spanning segment. At Y144 to S160 the chain is on the vacuolar side. A helical membrane pass occupies residues L161–G181. The tract at residues H182–H246 is required for zinc-binding. Over H182–Y282 the chain is Cytoplasmic. Residues H186–A248 are disordered. Over residues H196–H227 the composition is skewed to basic and acidic residues. Over residues L235 to H245 the composition is skewed to basic residues. Residues L283–W303 traverse the membrane as a helical segment. The Vacuolar segment spans residues Y304–E307. The helical transmembrane segment at W308 to I328 threads the bilayer. The Cytoplasmic portion of the chain corresponds to K329–E418.

This sequence belongs to the cation diffusion facilitator (CDF) transporter (TC 2.A.4) family. SLC30A subfamily.

It is found in the vacuole membrane. Its function is as follows. Involved in sequestration of excess zinc in the cytoplasm into vacuoles to maintain zinc homeostasis. This is Metal tolerance protein 1 (MTP1) from Oryza sativa subsp. japonica (Rice).